The chain runs to 386 residues: Acetylornithine aminotransferase (386 aa).

Residues 96–97 and Phe-123 contribute to the pyridoxal 5'-phosphate site; that span reads GA. Arg-126 is a N(2)-acetyl-L-ornithine binding site. 208–211 is a binding site for pyridoxal 5'-phosphate; the sequence is DEVQ. At Lys-237 the chain carries N6-(pyridoxal phosphate)lysine. Ser-265 serves as a coordination point for N(2)-acetyl-L-ornithine. Thr-266 serves as a coordination point for pyridoxal 5'-phosphate.

It belongs to the class-III pyridoxal-phosphate-dependent aminotransferase family. ArgD subfamily. Homodimer. Pyridoxal 5'-phosphate serves as cofactor.

It localises to the cytoplasm. It carries out the reaction N(2)-acetyl-L-ornithine + 2-oxoglutarate = N-acetyl-L-glutamate 5-semialdehyde + L-glutamate. Its pathway is amino-acid biosynthesis; L-arginine biosynthesis; N(2)-acetyl-L-ornithine from L-glutamate: step 4/4. In Bacillus cereus (strain ATCC 14579 / DSM 31 / CCUG 7414 / JCM 2152 / NBRC 15305 / NCIMB 9373 / NCTC 2599 / NRRL B-3711), this protein is Acetylornithine aminotransferase.